A 398-amino-acid chain; its full sequence is Stomatin-like protein 1 (398 aa).

The short motif at 6–10 (GYRAL) is the Tyrosine-type lysosomal sorting signal element. S28 carries the phosphoserine modification. A helical; Signal-anchor for type III membrane protein membrane pass occupies residues 58 to 78 (LISFLGFLLLLVTFPISGWFA). Topologically, residues 79 to 398 (LKIVPTYERM…KLEAVLRALK (320 aa)) are cytoplasmic. The region spanning 287 to 398 (KQPLAEGLLT…KLEAVLRALK (112 aa)) is the SCP2 domain.

The protein belongs to the band 7/mec-2 family. In terms of assembly, interacts with STOM; may redistribute STOM from the plasma membrane to late endosomes. Interacts with FBXW7 isoform 3 and CDK2. As to expression, ubiquitously expressed at low levels. Expression is highest in brain.

The protein resides in the membrane. The protein localises to the late endosome membrane. It localises to the membrane raft. Its subcellular location is the cell membrane. It is found in the cytoplasmic vesicle. Its function is as follows. May play a role in cholesterol transfer to late endosomes. May play a role in modulating membrane acid-sensing ion channels. Can specifically inhibit proton-gated current of ASIC1 isoform 1. Can increase inactivation speed of ASIC3. May be involved in regulation of proton sensing in dorsal root ganglions. May play a role in protecting FBXW7 isoform 3 from degradation. This is Stomatin-like protein 1 (STOML1) from Homo sapiens (Human).